We begin with the raw amino-acid sequence, 552 residues long: Serine palmitoyltransferase 3 (552 aa).

The disordered stretch occupies residues 1–29 (MANPGGGAVCNGKLHNHKKQSNGSQSRNC). Residues 59–79 (PLHVMVFTYMGYGIGTLFGYL) traverse the membrane as a helical segment. Lysine 371 is modified (N6-(pyridoxal phosphate)lysine).

It belongs to the class-II pyridoxal-phosphate-dependent aminotransferase family. Component of the serine palmitoyltransferase (SPT) complex, which is composed of SPTLC1, SPTLC2 or SPTLC3 and SPTSSA or SPTSSB. The heterodimer consisting of SPTLC1 and SPTLC2/SPTLC3 forms the catalytic core of the enzyme, while SPTSSA or SPTSSB subunits determine substrate specificity. SPT also interacts with ORMDL proteins, especially ORMDL3, which negatively regulate SPT activity in the presence of ceramides. Requires pyridoxal 5'-phosphate as cofactor. In terms of tissue distribution, expressed in most tissues, except peripheral blood cells and bone marrow, with highest levels in heart, kidney, liver, uterus and skin.

It localises to the endoplasmic reticulum membrane. The catalysed reaction is L-serine + hexadecanoyl-CoA + H(+) = 3-oxosphinganine + CO2 + CoA. It carries out the reaction dodecanoyl-CoA + L-serine + H(+) = 3-oxotetradecasphinganine + CO2 + CoA. The enzyme catalyses tetradecanoyl-CoA + L-serine + H(+) = 3-oxohexadecasphinganine + CO2 + CoA. It catalyses the reaction octadecanoyl-CoA + L-serine + H(+) = 3-oxoeicosasphinganine + CO2 + CoA. Its pathway is lipid metabolism; sphingolipid metabolism. SPT complex catalytic activity is negatively regulated by ORMDL proteins, including ORMDL3, in the presence of ceramides. This mechanism allows to maintain ceramide levels at sufficient concentrations for the production of complex sphingolipids, but which prevents the accumulation of ceramides to levels that trigger apoptosis. In terms of biological role, component of the serine palmitoyltransferase multisubunit enzyme (SPT) that catalyzes the initial and rate-limiting step in sphingolipid biosynthesis by condensing L-serine and activated acyl-CoA (most commonly palmitoyl-CoA) to form long-chain bases. The SPT complex is composed of SPTLC1, SPTLC2 or SPTLC3 and SPTSSA or SPTSSB. Within this complex, the heterodimer consisting of SPTLC1 and SPTLC2/SPTLC3 forms the catalytic core. The composition of the serine palmitoyltransferase (SPT) complex determines the substrate preference. The SPTLC1-SPTLC2-SPTSSA complex shows a strong preference for C16-CoA substrate, while the SPTLC1-SPTLC3-SPTSSA isozyme uses both C14-CoA and C16-CoA as substrates, with a slight preference for C14-CoA. The SPTLC1-SPTLC2-SPTSSB complex shows a strong preference for C18-CoA substrate, while the SPTLC1-SPTLC3-SPTSSB isozyme displays an ability to use a broader range of acyl-CoAs, without apparent preference. This is Serine palmitoyltransferase 3 from Homo sapiens (Human).